The following is a 511-amino-acid chain: Maturase K (511 aa).

Belongs to the intron maturase 2 family. MatK subfamily.

The protein localises to the plastid. It is found in the chloroplast. Usually encoded in the trnK tRNA gene intron. Probably assists in splicing its own and other chloroplast group II introns. The polypeptide is Maturase K (Lolium perenne (Perennial ryegrass)).